Reading from the N-terminus, the 442-residue chain is ATP-dependent protease ATPase subunit HslU (442 aa).

ATP-binding positions include Ile-18, 60–65 (GVGKTE), Asp-255, Glu-320, and Arg-392.

The protein belongs to the ClpX chaperone family. HslU subfamily. As to quaternary structure, a double ring-shaped homohexamer of HslV is capped on each side by a ring-shaped HslU homohexamer. The assembly of the HslU/HslV complex is dependent on binding of ATP.

Its subcellular location is the cytoplasm. Functionally, ATPase subunit of a proteasome-like degradation complex; this subunit has chaperone activity. The binding of ATP and its subsequent hydrolysis by HslU are essential for unfolding of protein substrates subsequently hydrolyzed by HslV. HslU recognizes the N-terminal part of its protein substrates and unfolds these before they are guided to HslV for hydrolysis. The chain is ATP-dependent protease ATPase subunit HslU from Aeromonas salmonicida (strain A449).